The primary structure comprises 574 residues: Membrane protein insertase YidC (574 aa).

6 helical membrane passes run 6-26 (VFLI…WGKD), 356-376 (FSIM…LHSF), 380-400 (WGWA…PLSA), 447-467 (GGCL…WVLV), 489-509 (PYFI…KLTP), and 525-545 (PLVF…YWVV).

It belongs to the OXA1/ALB3/YidC family. Type 1 subfamily. Interacts with the Sec translocase complex via SecD. Specifically interacts with transmembrane segments of nascent integral membrane proteins during membrane integration.

It is found in the cell inner membrane. Required for the insertion and/or proper folding and/or complex formation of integral membrane proteins into the membrane. Involved in integration of membrane proteins that insert both dependently and independently of the Sec translocase complex, as well as at least some lipoproteins. Aids folding of multispanning membrane proteins. This Xanthomonas axonopodis pv. citri (strain 306) protein is Membrane protein insertase YidC.